A 60-amino-acid polypeptide reads, in one-letter code: UPF0434 protein Ent638_1436 (60 aa).

It belongs to the UPF0434 family.

This chain is UPF0434 protein Ent638_1436, found in Enterobacter sp. (strain 638).